The primary structure comprises 61 residues: DNA-directed RNA polymerase subunit Rpo6 (61 aa).

The protein belongs to the archaeal Rpo6/eukaryotic RPB6 RNA polymerase subunit family. In terms of assembly, part of the RNA polymerase complex.

The protein localises to the cytoplasm. It catalyses the reaction RNA(n) + a ribonucleoside 5'-triphosphate = RNA(n+1) + diphosphate. DNA-dependent RNA polymerase (RNAP) catalyzes the transcription of DNA into RNA using the four ribonucleoside triphosphates as substrates. The chain is DNA-directed RNA polymerase subunit Rpo6 from Methanothermobacter thermautotrophicus (strain ATCC 29096 / DSM 1053 / JCM 10044 / NBRC 100330 / Delta H) (Methanobacterium thermoautotrophicum).